Consider the following 123-residue polypeptide: Phosphoribosyl-AMP cyclohydrolase (123 aa).

Residue aspartate 76 coordinates Mg(2+). Cysteine 77 provides a ligand contact to Zn(2+). Aspartate 78 and aspartate 80 together coordinate Mg(2+). Zn(2+) is bound by residues cysteine 93 and cysteine 100.

It belongs to the PRA-CH family. As to quaternary structure, homodimer. Requires Mg(2+) as cofactor. The cofactor is Zn(2+).

It localises to the cytoplasm. The catalysed reaction is 1-(5-phospho-beta-D-ribosyl)-5'-AMP + H2O = 1-(5-phospho-beta-D-ribosyl)-5-[(5-phospho-beta-D-ribosylamino)methylideneamino]imidazole-4-carboxamide. It functions in the pathway amino-acid biosynthesis; L-histidine biosynthesis; L-histidine from 5-phospho-alpha-D-ribose 1-diphosphate: step 3/9. Its function is as follows. Catalyzes the hydrolysis of the adenine ring of phosphoribosyl-AMP. The sequence is that of Phosphoribosyl-AMP cyclohydrolase from Methanocorpusculum labreanum (strain ATCC 43576 / DSM 4855 / Z).